The chain runs to 371 residues: 4-hydroxybenzoate polyprenyltransferase, mitochondrial (371 aa).

The transit peptide at 1–34 (MLGSRAAGFARGLRAVALAWLPGWRGRSFALARA) directs the protein to the mitochondrion. Residues 35 to 83 (AGAPHGGDLQPPACPEPRGRQLSLSAAAVVDSAPRPLQPYLRLMRLDKP) lie on the Mitochondrial matrix side of the membrane. A helical membrane pass occupies residues 84–104 (IGTWLLYLPCTWSIGLAAEPG). At 105–108 (CFPD) the chain is on the mitochondrial intermembrane side. A helical membrane pass occupies residues 109 to 129 (WYMLSLFGTGAILMRGAGCTI). Topologically, residues 130 to 148 (NDMWDQDYDKKVTRTANRP) are mitochondrial matrix. The chain crosses the membrane as a helical span at residues 149–169 (IAAGDISTFQSFVFLGGQLTL). Topologically, residues 170–172 (ALG) are mitochondrial intermembrane. The chain crosses the membrane as a helical span at residues 173–193 (VLLCLNYYSIALGAGSLLLVI). The Mitochondrial matrix portion of the chain corresponds to 194–203 (TYPLMKRISY). A helical membrane pass occupies residues 204-224 (WPQLALGLTFNWGALLGWSAI). Residues 225-231 (KGSCDPS) are Mitochondrial intermembrane-facing. Residues 232–252 (VCLPLYFSGVMWTLIYDTIYA) form a helical membrane-spanning segment. The Mitochondrial matrix segment spans residues 253–277 (HQDKRDDVLIGLKSTALRFGENTKP). A helical transmembrane segment spans residues 278–298 (WLSGFSVAMLGALSLVGVNSG). Over 299–300 (QT) the chain is Mitochondrial intermembrane. Residues 301–321 (APYYAALGAVGAHLTHQIYTL) traverse the membrane as a helical segment. The Mitochondrial matrix portion of the chain corresponds to 322–332 (DIHRPEDCWNK). A helical transmembrane segment spans residues 333–353 (FISNRTLGLIVFLGIVLGNLW). The Mitochondrial intermembrane segment spans residues 354–371 (KEKKTDKTKKGIENKIEN).

This sequence belongs to the UbiA prenyltransferase family. Requires Mg(2+) as cofactor. Widely expressed. Present in all of the tissues tested. Expressed at higher level in skeletal muscle, adrenal glands and the heart.

Its subcellular location is the mitochondrion inner membrane. The enzyme catalyses an all-trans-polyprenyl diphosphate + 4-hydroxybenzoate = a 4-hydroxy-3-(all-trans-polyprenyl)benzoate + diphosphate. The catalysed reaction is all-trans-decaprenyl diphosphate + 4-hydroxybenzoate = 4-hydroxy-3-(all-trans-decaprenyl)benzoate + diphosphate. It carries out the reaction all-trans-nonaprenyl diphosphate + 4-hydroxybenzoate = 4-hydroxy-3-(all-trans-nonaprenyl)benzoate + diphosphate. The protein operates within cofactor biosynthesis; ubiquinone biosynthesis. Mediates the second step in the final reaction sequence of coenzyme Q (CoQ) biosynthesis. Catalyzes the prenylation of para-hydroxybenzoate (PHB) with an all-trans polyprenyl donor (such as all-trans-decaprenyl diphosphate). The length of the polyprenyl side chain varies depending on the species, in humans, the side chain is comprised of 10 isoprenyls (decaprenyl) producing CoQ10 (also known as ubiquinone), whereas rodents predominantly generate CoQ9. However, this specificity is not complete, human tissues have low amounts of CoQ9 and rodent organs contain some CoQ10. Plays a central role in the biosynthesis of CoQ10. CoQ10 is a vital molecule that transports electrons from mitochondrial respiratory chain complexes. CoQs also function as cofactors for uncoupling protein and play a role as regulators of the extracellularly-induced ceramide-dependent apoptotic pathway. Regulates mitochondrial permeability transition pore (mPTP) opening and ROS production (pivotal events in cell death) in a tissue specific manner. This chain is 4-hydroxybenzoate polyprenyltransferase, mitochondrial, found in Homo sapiens (Human).